We begin with the raw amino-acid sequence, 244 residues long: Orotidine 5'-phosphate decarboxylase (244 aa).

Substrate-binding positions include aspartate 12, lysine 34, 61–70 (DLKLFDIPNT), threonine 125, arginine 187, glutamine 196, glycine 216, and arginine 217. The Proton donor role is filled by lysine 63.

The protein belongs to the OMP decarboxylase family. Type 1 subfamily. In terms of assembly, homodimer.

It catalyses the reaction orotidine 5'-phosphate + H(+) = UMP + CO2. It participates in pyrimidine metabolism; UMP biosynthesis via de novo pathway; UMP from orotate: step 2/2. Its function is as follows. Catalyzes the decarboxylation of orotidine 5'-monophosphate (OMP) to uridine 5'-monophosphate (UMP). This Dictyoglomus turgidum (strain DSM 6724 / Z-1310) protein is Orotidine 5'-phosphate decarboxylase.